A 163-amino-acid chain; its full sequence is MRIAIYPGTFDPVTNGHLDILKRATEFFDEVIVAVAVDSNKTTLFSLEERIQLLETAAEELSQVKIRGFEGLTVEFARQCGANAIIRGLRAMQDFEYEFQLALMNKKLAADIETIFLMTQSEFSFISSSSIKWAASLKGNISEFVPPHVERAIYRKYHPEIDD.

Residue Thr9 participates in substrate binding. ATP is bound by residues 9–10 and His17; that span reads TF. Substrate-binding residues include Lys41, Thr73, and Arg87. Residues 88-90, Glu98, and 123-129 contribute to the ATP site; these read GLR and FSFISSS.

This sequence belongs to the bacterial CoaD family. Homohexamer. Mg(2+) is required as a cofactor.

The protein localises to the cytoplasm. The enzyme catalyses (R)-4'-phosphopantetheine + ATP + H(+) = 3'-dephospho-CoA + diphosphate. Its pathway is cofactor biosynthesis; coenzyme A biosynthesis; CoA from (R)-pantothenate: step 4/5. Functionally, reversibly transfers an adenylyl group from ATP to 4'-phosphopantetheine, yielding dephospho-CoA (dPCoA) and pyrophosphate. This is Phosphopantetheine adenylyltransferase from Desulfitobacterium hafniense (strain DSM 10664 / DCB-2).